Here is a 130-residue protein sequence, read N- to C-terminus: Cytidine deaminase (130 aa).

A CMP/dCMP-type deaminase domain is found at 3–130 (VNLEWIIKQL…ELLMNGFKKS (128 aa)). 43–45 (NIE) contacts substrate. C54 contributes to the Zn(2+) binding site. E56 serves as the catalytic Proton donor. The Zn(2+) site is built by C88 and C91.

It belongs to the cytidine and deoxycytidylate deaminase family. Homodimer. Zn(2+) is required as a cofactor.

It catalyses the reaction cytidine + H2O + H(+) = uridine + NH4(+). The catalysed reaction is 2'-deoxycytidine + H2O + H(+) = 2'-deoxyuridine + NH4(+). Its function is as follows. This enzyme scavenges exogenous and endogenous cytidine and 2'-deoxycytidine for UMP synthesis. The protein is Cytidine deaminase (cdd) of Mycoplasma genitalium (strain ATCC 33530 / DSM 19775 / NCTC 10195 / G37) (Mycoplasmoides genitalium).